A 287-amino-acid chain; its full sequence is MNGGPSGFNNAPVTKAFVIATALFTVFFGIRGGSSKLGLSYQDIFEKFRIWKLIISAFAFSSTTQLLSGLYLLYFFRVFERQIGSNKYSVFIFFSGFVSLILETILLSLTKDPTANLLTSGPYALVFASFVPFFLDIPVTKRFGVLGVHFSDKSFIYLAGVQLLLSSWKRSIFTGICGIIAGSLYRLNIFGIRKAKFPEFMASLFSRFSLPSLSSHSQPPRRTSPNLGRQAVRAYRAPMPSTTEPSEEAIATLVSMGFDQNAARQALVHARNDVNAATNILLEAHSH.

6 helical membrane passes run 10 to 30 (NAPV…FFGI), 53 to 73 (LIIS…LYLL), 90 to 110 (VFIF…LSLT), 117 to 137 (LLTS…FLDI), 145 to 165 (VLGV…QLLL), and 172 to 192 (IFTG…IFGI). The UBA domain occupies 244–284 (EPSEEAIATLVSMGFDQNAARQALVHARNDVNAATNILLEA).

It belongs to the peptidase S54 family.

The protein localises to the membrane. Functionally, probable rhomboid-type serine protease that catalyzes intramembrane proteolysis. The protein is Rhomboid-like protein 18 of Arabidopsis thaliana (Mouse-ear cress).